Here is a 141-residue protein sequence, read N- to C-terminus: MALSLSGLILPKLMQQRAFSVSSAVSAIQKLTRVRVVDNSTLGNAHHHRPPKVIHVYNKNGVGKVGDRVLLAIKGQKKKAIIVGHKMPGARMTPRFDSNNVVLIEDNGNPTGTRIKAPLPTHLRKLEGEYSKLLAIAQRFV.

Residues 1–19 constitute a mitochondrion transit peptide; it reads MALSLSGLILPKLMQQRAF.

Belongs to the universal ribosomal protein uL14 family. Component of the mitochondrial ribosome large subunit (39S) which comprises a 16S rRNA and about 50 distinct proteins. Interacts with MALSU1.

It localises to the mitochondrion. Its function is as follows. May form part of 2 intersubunit bridges in the assembled ribosome. Upon binding to MALSU1, intersubunit bridge formation is blocked, preventing ribosome formation and repressing translation. The polypeptide is Large ribosomal subunit protein uL14m (mrpl14) (Danio rerio (Zebrafish)).